The primary structure comprises 208 residues: Imidazoleglycerol-phosphate dehydratase (208 aa).

This sequence belongs to the imidazoleglycerol-phosphate dehydratase family.

The protein localises to the cytoplasm. The catalysed reaction is D-erythro-1-(imidazol-4-yl)glycerol 3-phosphate = 3-(imidazol-4-yl)-2-oxopropyl phosphate + H2O. It participates in amino-acid biosynthesis; L-histidine biosynthesis; L-histidine from 5-phospho-alpha-D-ribose 1-diphosphate: step 6/9. This chain is Imidazoleglycerol-phosphate dehydratase, found in Psychrobacter sp. (strain PRwf-1).